A 322-amino-acid chain; its full sequence is Probable transposase for insertion sequence element ISA1214 (322 aa).

It belongs to the transposase 11 family.

Its function is as follows. Involved in the transposition of the insertion sequence ISA1214. The sequence is that of Probable transposase for insertion sequence element ISA1214 from Archaeoglobus fulgidus (strain ATCC 49558 / DSM 4304 / JCM 9628 / NBRC 100126 / VC-16).